Here is a 62-residue protein sequence, read N- to C-terminus: Defensin BmKDfsin5 (62 aa).

Residues 1–24 (MKVIALFFLFAFIFCTLEVAIVEA) form the signal peptide. Disulfide bonds link Cys28-Cys49, Cys35-Cys57, and Cys39-Cys59.

It belongs to the invertebrate defensin family. Type 2 subfamily. In terms of tissue distribution, highly expressed in non-venom gland (hemolymph) and moderately expressed in venom gland.

The protein localises to the secreted. Antibacterial peptide active against Gram-positive bacteria (including S.aureus ATCC25923 (MIC=2.5 uM), M.luteus AB93113 (MIC=2.5 uM), and the antibiotic-resistant S.epidermidis PRSE P1389 (MIC=1.25 uM)), but not against Gram-negative bacteria (including E.coli and P.aeruginosa). Also has weak blocking activity on Kv1.1/KCNA1 (8.7% inhibition), Kv1.2/KCNA2 (10.2% inhibition), Kv1.3/KCNA3 (9.0% inhibition), KCa3.1/KCNN4/IK (9.1% inhibition), KCa2.3/KCNN3/SK3 (46.3% inhibition) and Kv11.1/KCNH2/ERG1 (16.9% inhibition) channels (tested at 1 uM). It inhibits potassium channel current by interacting with the pore region. The chain is Defensin BmKDfsin5 from Olivierus martensii (Manchurian scorpion).